Reading from the N-terminus, the 1435-residue chain is Gag-Pol polyprotein (1435 aa).

A lipid anchor (N-myristoyl glycine; by host) is attached at G2. The interaction with Gp41 stretch occupies residues 7-31; it reads VLSGGKLDAWEKIRLRPGGKKKYRL. Residues 8 to 43 are interaction with host CALM1; that stretch reads LSGGKLDAWEKIRLRPGGKKKYRLKHLVWASRELER. Positions 12-19 are interaction with host AP3D1; it reads KLDAWEKI. An interaction with membrane phosphatidylinositol 4,5-bisphosphate and RNA region spans residues 14 to 33; it reads DAWEKIRLRPGGKKKYRLKH. Positions 16–22 match the Nuclear export signal motif; it reads WEKIRLR. The Nuclear localization signal motif lies at 26–32; sequence KKKYRLK. The interval 73–77 is interaction with membrane phosphatidylinositol 4,5-bisphosphate; it reads EELKS. The segment at 108-127 is disordered; that stretch reads QNKSQQKTQQAAADKEKDNK. The span at 109 to 118 shows a compositional bias: polar residues; that stretch reads NKSQQKTQQA. A Phosphotyrosine; by host modification is found at Y132. Positions 189–227 are interaction with human PPIA/CYPA and NUP153; that stretch reads NTVGGHQAAMQMLKDTINEEAAEWDRVHPVHAGPIPPGQ. The tract at residues 277–363 is dimerization/Multimerization of capsid protein p24; it reads YSPVSILDIK…GGPSHKARVL (87 aa). 2 consecutive CCHC-type zinc fingers follow at residues 391–408 and 412–429; these read VKCF…NCRA and KGCW…DCTE. A disordered region spans residues 445–482; that stretch reads EARKFSPEQARTNSPTSRELRVRRGDDPLSEAGAAEGQ. Over residues 462–471 the composition is skewed to basic and acidic residues; that stretch reads RELRVRRGDD. A dimerization of protease region spans residues 489–493; that stretch reads PQITL. Residues 508 to 577 form the Peptidase A2 domain; that stretch reads REALLDTGAD…TPVNIIGRNI (70 aa). Residue D513 is the For protease activity; shared with dimeric partner of the active site. Dimerization of protease stretches follow at residues 537 to 543 and 576 to 588; these read GIGGFIK and NILT…LNFP. In terms of domain architecture, Reverse transcriptase spans 631 to 821; that stretch reads EGKISRIGPE…PPFLWMGYEL (191 aa). Residues D697, D772, and D773 each contribute to the Mg(2+) site. The RT 'primer grip' stretch occupies residues 814 to 822; it reads FLWMGYELH. The short motif at 985 to 1001 is the Tryptophan repeat motif element; it reads WETWWTEYWQATWIPEW. The RNase H type-1 domain maps to 1021–1144; it reads IAGAETYYID…VDKLVSSGVR (124 aa). Mg(2+) is bound by residues D1030, E1065, D1085, and D1136. The Integrase-type zinc-finger motif lies at 1150-1191; it reads DGIDKAQEEHERYHNNWRAVASDFNLPPIVAKEIVASCDKCQ. H1159, H1163, C1187, and C1190 together coordinate Zn(2+). The 151-residue stretch at 1201 to 1351 folds into the Integrase catalytic domain; the sequence is VDCSPGIWQL…SAGERIIDII (151 aa). 3 residues coordinate Mg(2+): D1211, D1263, and E1299. The integrase-type DNA-binding region spans 1370–1417; the sequence is FRVYYRDSRDPIWKGPAKLLWKGEGAVVIQDNSEIKVVPRREAKIIRD.

As to quaternary structure, homotrimer; further assembles as hexamers of trimers. Interacts with gp41 (via C-terminus). Interacts with host CALM1; this interaction induces a conformational change in the Matrix protein, triggering exposure of the myristate group. Interacts with host AP3D1; this interaction allows the polyprotein trafficking to multivesicular bodies during virus assembly. Part of the pre-integration complex (PIC) which is composed of viral genome, matrix protein, Vpr and integrase. Homodimer; the homodimer further multimerizes as homohexamers or homopentamers. Interacts with human PPIA/CYPA; This interaction stabilizes the capsid. Interacts with human NUP153. Interacts with host PDZD8; this interaction stabilizes the capsid. Interacts with monkey TRIM5; this interaction destabilizes the capsid. In terms of assembly, homodimer, whose active site consists of two apposed aspartic acid residues. As to quaternary structure, heterodimer of p66 RT and p51 RT (RT p66/p51). Heterodimerization of RT is essential for DNA polymerase activity. The overall folding of the subdomains is similar in p66 RT and p51 RT but the spatial arrangements of the subdomains are dramatically different. Homodimer; possibly can form homotetramer. Part of the pre-integration complex (PIC) which is composed of viral genome, matrix protein, Vpr and integrase. Interacts with human SMARCB1/INI1 and human PSIP1/LEDGF isoform 1. Interacts with human KPNA3; this interaction might play a role in nuclear import of the pre-integration complex. Interacts with human NUP153; this interaction might play a role in nuclear import of the pre-integration complex. Mg(2+) serves as cofactor. In terms of processing, specific enzymatic cleavages by the viral protease yield mature proteins. The protease is released by autocatalytic cleavage. The polyprotein is cleaved during and after budding, this process is termed maturation. Proteolytic cleavage of p66 RT removes the RNase H domain to yield the p51 RT subunit. Nucleocapsid protein p7 might be further cleaved after virus entry. Post-translationally, tyrosine phosphorylated presumably in the virion by a host kinase. Phosphorylation is apparently not a major regulator of membrane association. Phosphorylated possibly by host MAPK1; this phosphorylation is necessary for Pin1-mediated virion uncoating. In terms of processing, methylated by host PRMT6, impairing its function by reducing RNA annealing and the initiation of reverse transcription.

The protein resides in the host cell membrane. Its subcellular location is the host endosome. It is found in the host multivesicular body. The protein localises to the virion membrane. It localises to the host nucleus. The protein resides in the host cytoplasm. Its subcellular location is the virion. The enzyme catalyses Specific for a P1 residue that is hydrophobic, and P1' variable, but often Pro.. It catalyses the reaction Endohydrolysis of RNA in RNA/DNA hybrids. Three different cleavage modes: 1. sequence-specific internal cleavage of RNA. Human immunodeficiency virus type 1 and Moloney murine leukemia virus enzymes prefer to cleave the RNA strand one nucleotide away from the RNA-DNA junction. 2. RNA 5'-end directed cleavage 13-19 nucleotides from the RNA end. 3. DNA 3'-end directed cleavage 15-20 nucleotides away from the primer terminus.. It carries out the reaction 3'-end directed exonucleolytic cleavage of viral RNA-DNA hybrid.. The catalysed reaction is DNA(n) + a 2'-deoxyribonucleoside 5'-triphosphate = DNA(n+1) + diphosphate. With respect to regulation, protease: The viral protease is inhibited by many synthetic protease inhibitors (PIs), such as amprenavir, atazanavir, indinavir, loprinavir, nelfinavir, ritonavir and saquinavir. Use of protease inhibitors in tritherapy regimens permit more ambitious therapeutic strategies. Reverse transcriptase/ribonuclease H: RT can be inhibited either by nucleoside RT inhibitors (NRTIs) or by non nucleoside RT inhibitors (NNRTIs). NRTIs act as chain terminators, whereas NNRTIs inhibit DNA polymerization by binding a small hydrophobic pocket near the RT active site and inducing an allosteric change in this region. Classical NRTIs are abacavir, adefovir (PMEA), didanosine (ddI), lamivudine (3TC), stavudine (d4T), tenofovir (PMPA), zalcitabine (ddC), and zidovudine (AZT). Classical NNRTIs are atevirdine (BHAP U-87201E), delavirdine, efavirenz (DMP-266), emivirine (I-EBU), and nevirapine (BI-RG-587). The tritherapies used as a basic effective treatment of AIDS associate two NRTIs and one NNRTI. Its function is as follows. Mediates, with Gag polyprotein, the essential events in virion assembly, including binding the plasma membrane, making the protein-protein interactions necessary to create spherical particles, recruiting the viral Env proteins, and packaging the genomic RNA via direct interactions with the RNA packaging sequence (Psi). Gag-Pol polyprotein may regulate its own translation, by the binding genomic RNA in the 5'-UTR. At low concentration, the polyprotein would promote translation, whereas at high concentration, the polyprotein would encapsidate genomic RNA and then shut off translation. Functionally, targets the polyprotein to the plasma membrane via a multipartite membrane-binding signal, that includes its myristoylated N-terminus. Matrix protein is part of the pre-integration complex. Implicated in the release from host cell mediated by Vpu. Binds to RNA. In terms of biological role, forms the conical core that encapsulates the genomic RNA-nucleocapsid complex in the virion. Most core are conical, with only 7% tubular. The core is constituted by capsid protein hexamer subunits. The core is disassembled soon after virion entry. Host restriction factors such as TRIM5-alpha or TRIMCyp bind retroviral capsids and cause premature capsid disassembly, leading to blocks in reverse transcription. Capsid restriction by TRIM5 is one of the factors which restricts HIV-1 to the human species. Host PIN1 apparently facilitates the virion uncoating. On the other hand, interactions with PDZD8 or CYPA stabilize the capsid. Encapsulates and protects viral dimeric unspliced genomic RNA (gRNA). Binds these RNAs through its zinc fingers. Acts as a nucleic acid chaperone which is involved in rearangement of nucleic acid secondary structure during gRNA retrotranscription. Also facilitates template switch leading to recombination. As part of the polyprotein, participates in gRNA dimerization, packaging, tRNA incorporation and virion assembly. Its function is as follows. Aspartyl protease that mediates proteolytic cleavages of Gag and Gag-Pol polyproteins during or shortly after the release of the virion from the plasma membrane. Cleavages take place as an ordered, step-wise cascade to yield mature proteins. This process is called maturation. Displays maximal activity during the budding process just prior to particle release from the cell. Also cleaves Nef and Vif, probably concomitantly with viral structural proteins on maturation of virus particles. Hydrolyzes host EIF4GI and PABP1 in order to shut off the capped cellular mRNA translation. The resulting inhibition of cellular protein synthesis serves to ensure maximal viral gene expression and to evade host immune response. Also mediates cleavage of host YTHDF3. Mediates cleavage of host CARD8, thereby activating the CARD8 inflammasome, leading to the clearance of latent HIV-1 in patient CD4(+) T-cells after viral reactivation; in contrast, HIV-1 can evade CARD8-sensing when its protease remains inactive in infected cells prior to viral budding. Functionally, multifunctional enzyme that converts the viral RNA genome into dsDNA in the cytoplasm, shortly after virus entry into the cell. This enzyme displays a DNA polymerase activity that can copy either DNA or RNA templates, and a ribonuclease H (RNase H) activity that cleaves the RNA strand of RNA-DNA heteroduplexes in a partially processive 3' to 5' endonucleasic mode. Conversion of viral genomic RNA into dsDNA requires many steps. A tRNA(3)-Lys binds to the primer-binding site (PBS) situated at the 5'-end of the viral RNA. RT uses the 3' end of the tRNA primer to perform a short round of RNA-dependent minus-strand DNA synthesis. The reading proceeds through the U5 region and ends after the repeated (R) region which is present at both ends of viral RNA. The portion of the RNA-DNA heteroduplex is digested by the RNase H, resulting in a ssDNA product attached to the tRNA primer. This ssDNA/tRNA hybridizes with the identical R region situated at the 3' end of viral RNA. This template exchange, known as minus-strand DNA strong stop transfer, can be either intra- or intermolecular. RT uses the 3' end of this newly synthesized short ssDNA to perform the RNA-dependent minus-strand DNA synthesis of the whole template. RNase H digests the RNA template except for two polypurine tracts (PPTs) situated at the 5'-end and near the center of the genome. It is not clear if both polymerase and RNase H activities are simultaneous. RNase H probably can proceed both in a polymerase-dependent (RNA cut into small fragments by the same RT performing DNA synthesis) and a polymerase-independent mode (cleavage of remaining RNA fragments by free RTs). Secondly, RT performs DNA-directed plus-strand DNA synthesis using the PPTs that have not been removed by RNase H as primers. PPTs and tRNA primers are then removed by RNase H. The 3' and 5' ssDNA PBS regions hybridize to form a circular dsDNA intermediate. Strand displacement synthesis by RT to the PBS and PPT ends produces a blunt ended, linear dsDNA copy of the viral genome that includes long terminal repeats (LTRs) at both ends. In terms of biological role, catalyzes viral DNA integration into the host chromosome, by performing a series of DNA cutting and joining reactions. This enzyme activity takes place after virion entry into a cell and reverse transcription of the RNA genome in dsDNA. The first step in the integration process is 3' processing. This step requires a complex comprising the viral genome, matrix protein, Vpr and integrase. This complex is called the pre-integration complex (PIC). The integrase protein removes 2 nucleotides from each 3' end of the viral DNA, leaving recessed CA OH's at the 3' ends. In the second step, the PIC enters cell nucleus. This process is mediated through integrase and Vpr proteins, and allows the virus to infect a non dividing cell. This ability to enter the nucleus is specific of lentiviruses, other retroviruses cannot and rely on cell division to access cell chromosomes. In the third step, termed strand transfer, the integrase protein joins the previously processed 3' ends to the 5' ends of strands of target cellular DNA at the site of integration. The 5'-ends are produced by integrase-catalyzed staggered cuts, 5 bp apart. A Y-shaped, gapped, recombination intermediate results, with the 5'-ends of the viral DNA strands and the 3' ends of target DNA strands remaining unjoined, flanking a gap of 5 bp. The last step is viral DNA integration into host chromosome. This involves host DNA repair synthesis in which the 5 bp gaps between the unjoined strands are filled in and then ligated. Since this process occurs at both cuts flanking the HIV genome, a 5 bp duplication of host DNA is produced at the ends of HIV-1 integration. Alternatively, Integrase may catalyze the excision of viral DNA just after strand transfer, this is termed disintegration. The sequence is that of Gag-Pol polyprotein (gag-pol) from Homo sapiens (Human).